Here is a 358-residue protein sequence, read N- to C-terminus: Trace amine-associated receptor 7b (358 aa).

Topologically, residues 1–47 (MATDNDSFPWDQDSILSSDMFSATSTELCYENLNRSCVRSPYSPGPR) are extracellular. 2 N-linked (GlcNAc...) asparagine glycosylation sites follow: Asn5 and Asn34. 2 cysteine pairs are disulfide-bonded: Cys37-Cys201 and Cys120-Cys205. Residues 48 to 68 (LILYAVFGFGAALAVCGNLLV) form a helical membrane-spanning segment. At 69 to 83 (MTSILHFRQLHSPAN) the chain is on the cytoplasmic side. Residues 84-104 (FLVVSLACADFLVGLTVMPFS) traverse the membrane as a helical segment. At 105–121 (TVRSVEGCWYFGESYCK) the chain is on the extracellular side. A helical membrane pass occupies residues 122–143 (LHTCFDVSFCYCSIFHLCFISV). The Cytoplasmic segment spans residues 144 to 166 (DRYIAVSDPLTYPTRFTAFVSGK). Residues 167 to 187 (CITFSWLLSTIYGFSLLYTGA) traverse the membrane as a helical segment. Over 188–212 (NEAGLEDLVSALTCVGGCQLAVNQS) the chain is Extracellular. The N-linked (GlcNAc...) asparagine glycan is linked to Asn210. The chain crosses the membrane as a helical span at residues 213 to 233 (WVFINFLLFLIPTLVMITVYS). Residues 234-274 (KIFLIAKQQAQNIEKMSKQTARASDSYKDRVAKRERKAAKT) lie on the Cytoplasmic side of the membrane. Residues 275–295 (LGIAVAAFLLSWLPYFIDSII) form a helical membrane-spanning segment. The Extracellular portion of the chain corresponds to 296–309 (DAFLGFITPTYVYE). A helical membrane pass occupies residues 310–333 (ILVWIAYYNSAMNPLIYAFFYPWF). At 334-358 (RKAIKLIVSGKVLRENSSTTNLFPE) the chain is on the cytoplasmic side.

Belongs to the G-protein coupled receptor 1 family. As to expression, specifically expressed in neurons of the olfactory epithelium.

It is found in the cell membrane. In terms of biological role, olfactory receptor specific for N,N-dimethylalkylamines trace amines, such as N,N-dimethylcyclohexylamine. Trace amine compounds are enriched in animal body fluids and act on trace amine-associated receptors (TAARs) to elicit both intraspecific and interspecific innate behaviors. Ligand-binding causes a conformation change that triggers signaling via G(s)-class of G alpha proteins (GNAL or GNAS). In Mus musculus (Mouse), this protein is Trace amine-associated receptor 7b.